The sequence spans 224 residues: Small ribosomal subunit protein uS3 (224 aa).

Residues 39–107 (IREFLKKKPS…DVWVEIAEVK (69 aa)) enclose the KH type-2 domain.

The protein belongs to the universal ribosomal protein uS3 family. In terms of assembly, part of the 30S ribosomal subunit. Forms a tight complex with proteins S10 and S14.

Functionally, binds the lower part of the 30S subunit head. Binds mRNA in the 70S ribosome, positioning it for translation. The sequence is that of Small ribosomal subunit protein uS3 from Chlamydia trachomatis serovar D (strain ATCC VR-885 / DSM 19411 / UW-3/Cx).